Consider the following 472-residue polypeptide: MPREVITIQCGQCGNQIGEVFWNRLCTEHGINPDGTLRPEAYTFNDRKDVFFYQSDDEHYVPRAILLDTEPGVISHIRNGPIKELINPENVYIDSTGGGAGNIWTKGFQCGEAGFEKIVEIIDREADGADSLAGFSLTHSIAGGTGSGMGSFLLDRLSDRYPKALLQTYSVFPNTTADIIVQPYNSILTLQRLALCADAVVVLDNTALDRIITNHIPNELLTNPFEHVNSLVSTVMAASTSTLRLPGFMSNDLLSLVSSLVPTPRLHFLMSSYTPITSSSLNVKEHTKDQEAGSGAVAGAAAGATRRQVHTDSIVQLVKRLLHPTNGMVSCGRDGKYISLLNIVQGEAESNQLYKSLQQIKEGRDVKFIDWGPSNMQMALSKRSPFTNEAHKVSGLMLANHTAIRKIFDNINNTFTQLFSKRAYLQNYIDSMVTGGEPEILEQFTDAQAVCTSLSKEYEAAESKDYLEYIGM.

A GTP-binding site is contributed by 142-148 (AGGTGSG).

The protein belongs to the tubulin family. As to quaternary structure, component of the gamma-tubulin small complex (gamma-TuSC) composed of tubulin gamma chain, gamma-tubulin complex protein 2 (GCP2) and gamma-tubulin complex protein 3 (GCP3). Interacts with GCP2 and GCP3. Interacts with EB1.

The protein resides in the cytoplasm. It is found in the cytoskeleton. The protein localises to the flagellum axoneme. Its subcellular location is the flagellum basal body. It localises to the spindle. The protein resides in the microtubule organizing center. Tubulin is the major constituent of microtubules (Potential). The gamma chain is found at microtubule organizing centers (MTOC) such as the centrosome. Component of the gamma-tubulin small complex (gamma-TuSC) involved in microtubule nucleation for the formation of median bodies and in the biogenesis of flagella. Gamma-TuSC may be required for the correct positioning of EB1 within the trophozoites. The chain is Tubulin gamma chain from Giardia intestinalis (strain ATCC 50803 / WB clone C6) (Giardia lamblia).